Here is a 365-residue protein sequence, read N- to C-terminus: Pre-small/secreted glycoprotein (365 aa).

Positions 1 to 32 (MGASGILQLPRERFRKTSFFVWVIILFHKVFS) are cleaved as a signal peptide. Asn40 carries an N-linked (GlcNAc...) asparagine; by host glycan. 2 disulfides stabilise this stretch: Cys108-Cys135 and Cys121-Cys147. N-linked (GlcNAc...) asparagine; by host glycans are attached at residues Asn204, Asn228, Asn257, and Asn268.

Belongs to the filoviruses glycoprotein family. As to quaternary structure, homodimer; disulfide-linked. The homodimers are linked by two disulfide bonds in a parallel orientation. Monomer. Post-translationally, this precursor is processed into mature sGP and delta-peptide by host furin or furin-like proteases. The cleavage site corresponds to the furin optimal cleavage sequence [KR]-X-[KR]-R. N-glycosylated. In terms of processing, O-glycosylated.

Its subcellular location is the secreted. Functionally, seems to possess an anti-inflammatory activity as it can reverse the barrier-decreasing effects of TNF alpha. Might therefore contribute to the lack of inflammatory reaction seen during infection in spite the of extensive necrosis and massive virus production. Does not seem to be involved in activation of primary macrophages. Does not seem to interact specifically with neutrophils. In terms of biological role, viroporin that permeabilizes mammalian cell plasma membranes. It acts by altering permeation of ionic compounds and small molecules. This activity may lead to viral enterotoxic activity. The protein is Pre-small/secreted glycoprotein (GP) of Epomops franqueti (Franquet's epauletted fruit bat).